Consider the following 430-residue polypeptide: Enolase (430 aa).

Glutamine 163 lines the (2R)-2-phosphoglycerate pocket. Glutamate 205 functions as the Proton donor in the catalytic mechanism. Mg(2+) is bound by residues aspartate 242, glutamate 287, and aspartate 314. Residues lysine 339, arginine 368, serine 369, and lysine 390 each coordinate (2R)-2-phosphoglycerate. Lysine 339 acts as the Proton acceptor in catalysis.

It belongs to the enolase family. Mg(2+) is required as a cofactor.

The protein localises to the cytoplasm. The protein resides in the secreted. It localises to the cell surface. The enzyme catalyses (2R)-2-phosphoglycerate = phosphoenolpyruvate + H2O. The protein operates within carbohydrate degradation; glycolysis; pyruvate from D-glyceraldehyde 3-phosphate: step 4/5. In terms of biological role, catalyzes the reversible conversion of 2-phosphoglycerate (2-PG) into phosphoenolpyruvate (PEP). It is essential for the degradation of carbohydrates via glycolysis. This is Enolase from Bacillus velezensis (strain DSM 23117 / BGSC 10A6 / LMG 26770 / FZB42) (Bacillus amyloliquefaciens subsp. plantarum).